A 323-amino-acid chain; its full sequence is Putative CDC123-like protein L884 (323 aa).

This sequence belongs to the CDC123 family.

The sequence is that of Putative CDC123-like protein L884 from Acanthamoeba polyphaga mimivirus (APMV).